The chain runs to 1380 residues: DNA-directed RNA polymerase subunit beta (1380 aa).

The protein belongs to the RNA polymerase beta chain family. The RNAP catalytic core consists of 2 alpha, 1 beta, 1 beta' and 1 omega subunit. When a sigma factor is associated with the core the holoenzyme is formed, which can initiate transcription.

It carries out the reaction RNA(n) + a ribonucleoside 5'-triphosphate = RNA(n+1) + diphosphate. Its function is as follows. DNA-dependent RNA polymerase catalyzes the transcription of DNA into RNA using the four ribonucleoside triphosphates as substrates. This Ehrlichia chaffeensis (strain ATCC CRL-10679 / Arkansas) protein is DNA-directed RNA polymerase subunit beta.